Reading from the N-terminus, the 1302-residue chain is DNA-directed RNA polymerase subunit beta (1302 aa).

It belongs to the RNA polymerase beta chain family. In terms of assembly, the RNAP catalytic core consists of 2 alpha, 1 beta, 1 beta' and 1 omega subunit. When a sigma factor is associated with the core the holoenzyme is formed, which can initiate transcription.

It carries out the reaction RNA(n) + a ribonucleoside 5'-triphosphate = RNA(n+1) + diphosphate. DNA-dependent RNA polymerase catalyzes the transcription of DNA into RNA using the four ribonucleoside triphosphates as substrates. The chain is DNA-directed RNA polymerase subunit beta from Spiroplasma citri.